The sequence spans 402 residues: Zinc finger CCHC domain-containing protein 12 (402 aa).

The interval 1–20 (MASILSRLGSSRGQNSPLPP) is disordered. A CCHC-type zinc finger spans residues 346 to 363 (IHCSHCGEEGHSKETCDN). The tract at residues 383–402 (HAEERARGAPGEPIGLSEPQ) is disordered.

It belongs to the ZCCHC12 family. In terms of assembly, interacts with SMAD1 and CREB-binding protein (CBP). Forms a protein-DNA complex through its association with SMAD1. As to expression, in embryonic brains expression is restricted to the ventral region of the forebrain, including the septum, amygdala, caudal putamen, and in the basal-forebrain cholinergic neurons. In adults, expressed in the brain, and at low levels in the testis.

Functionally, transcriptional coactivator in the bone morphogenetic protein (BMP)-signaling pathway. It positively modulates BMP signaling by interacting with SMAD1 and associating with CBP in the transcription complex. It contributes to the BMP-induced enhancement of cholinergic-neuron-specific gene expression. This is Zinc finger CCHC domain-containing protein 12 (Zcchc12) from Mus musculus (Mouse).